The following is a 227-amino-acid chain: Enolase-phosphatase E1 (227 aa).

Belongs to the HAD-like hydrolase superfamily. MasA/MtnC family. As to quaternary structure, monomer. The cofactor is Mg(2+).

The enzyme catalyses 5-methylsulfanyl-2,3-dioxopentyl phosphate + H2O = 1,2-dihydroxy-5-(methylsulfanyl)pent-1-en-3-one + phosphate. Its pathway is amino-acid biosynthesis; L-methionine biosynthesis via salvage pathway; L-methionine from S-methyl-5-thio-alpha-D-ribose 1-phosphate: step 3/6. It participates in amino-acid biosynthesis; L-methionine biosynthesis via salvage pathway; L-methionine from S-methyl-5-thio-alpha-D-ribose 1-phosphate: step 4/6. Functionally, bifunctional enzyme that catalyzes the enolization of 2,3-diketo-5-methylthiopentyl-1-phosphate (DK-MTP-1-P) into the intermediate 2-hydroxy-3-keto-5-methylthiopentenyl-1-phosphate (HK-MTPenyl-1-P), which is then dephosphorylated to form the acireductone 1,2-dihydroxy-3-keto-5-methylthiopentene (DHK-MTPene). The polypeptide is Enolase-phosphatase E1 (Azotobacter vinelandii (strain DJ / ATCC BAA-1303)).